The chain runs to 38 residues: FTCAISCDIKVNGKPCKGSGEKKCSGGWSCKFNVCVKV.

Intrachain disulfides connect Cys-3-Cys-24, Cys-7-Cys-30, and Cys-16-Cys-35.

In terms of tissue distribution, expressed by the venom gland.

The protein localises to the secreted. Has strong antifungal activity against C.albicans MDM8, C.krusei IOC 4559 (MIC=2.5-5 uM), C.glabrata IOC 45658 (MIC=2.5-5 uM), C.albicans IOC 45588 (MIC=2.5-5 uM), C.parapsilosis IOC 456416 (MIC=2.5-5 uM), C.tropicalis IOC 45608 (MIC=2.5-5 uM), C.guilliermondii IOC 455716 (MIC=2.5-5 uM) and A.niger (MIC=5-10 uM). Lacks antifungal activity against B.bassiana. Has no antibacterial effect against Gram-positive bacteria M.luteus, S.epidermidis, S.aureus or against Gram-negative bacteria E.coli and P.aeruginosa. Has no hemolytic activity against human erythrocytes. Probable ion channel inhibitor. This chain is U-theraphotoxin-Aju1a, found in Avicularia juruensis (Yellow-banded pinktoe).